The following is a 545-amino-acid chain: Chaperonin GroEL 2 (545 aa).

Residues 29 to 32 (TLGP), 86 to 90 (DGTTT), Gly-413, 479 to 481 (NAA), and Asp-495 each bind ATP.

It belongs to the chaperonin (HSP60) family. Forms a cylinder of 14 subunits composed of two heptameric rings stacked back-to-back. Interacts with the co-chaperonin GroES.

It localises to the cytoplasm. It carries out the reaction ATP + H2O + a folded polypeptide = ADP + phosphate + an unfolded polypeptide.. Functionally, together with its co-chaperonin GroES, plays an essential role in assisting protein folding. The GroEL-GroES system forms a nano-cage that allows encapsulation of the non-native substrate proteins and provides a physical environment optimized to promote and accelerate protein folding. This chain is Chaperonin GroEL 2, found in Prochlorococcus marinus (strain MIT 9301).